The sequence spans 382 residues: Kelch domain-containing protein 3 (382 aa).

5 Kelch repeats span residues 25 to 77 (RVYS…PYMR), 88 to 138 (TVFL…VLGK), 139 to 189 (IMYI…TMLG), 191 to 249 (HMYV…GYNG), and 251 to 301 (LYIF…IVGD).

As to quaternary structure, component of a CRL2(KLHDC3) complex, also named ECS(KLHDC3) complex, composed of CUL2, Elongin BC (ELOB and ELOC), RBX1 and substrate-specific adapter KLHDC3. May form oligomers as a KLHDC3-ELOB-ELOC complex; this interaction is likely autoinhibitory for the E3 ligase complex. Expressed specifically in testis, particularly in pachytene spermatocytes.

It is found in the cytoplasm. It participates in protein modification; protein ubiquitination. In terms of biological role, substrate-recognition component of a Cul2-RING (CRL2) E3 ubiquitin-protein ligase complex of the DesCEND (destruction via C-end degrons) pathway, which recognizes a C-degron located at the extreme C terminus of target proteins, leading to their ubiquitination and degradation. The C-degron recognized by the DesCEND pathway is usually a motif of less than ten residues and can be present in full-length proteins, truncated proteins or proteolytically cleaved forms. The CRL2(KLHDC3) complex specifically recognizes proteins with a glycine (Gly) at the C-terminus, leading to their ubiquitination and degradation: recognizes the C-terminal -Arg-(Xaa)n-Arg-Gly, -Arg-(Xaa)n-Lys-Gly, and -Arg-(Xaa)n-Gln-Gly degrons. The CRL2(KLHDC3) complex mediates ubiquitination and degradation of truncated SELENOV and SEPHS2 selenoproteins produced by failed UGA/Sec decoding, which end with a glycine. May be involved in meiotic recombination process. The chain is Kelch domain-containing protein 3 from Mus musculus (Mouse).